A 277-amino-acid polypeptide reads, in one-letter code: Tryptophan synthase alpha chain (277 aa).

Catalysis depends on proton acceptor residues Glu-59 and Asp-70.

This sequence belongs to the TrpA family. In terms of assembly, tetramer of two alpha and two beta chains.

It carries out the reaction (1S,2R)-1-C-(indol-3-yl)glycerol 3-phosphate + L-serine = D-glyceraldehyde 3-phosphate + L-tryptophan + H2O. It functions in the pathway amino-acid biosynthesis; L-tryptophan biosynthesis; L-tryptophan from chorismate: step 5/5. The alpha subunit is responsible for the aldol cleavage of indoleglycerol phosphate to indole and glyceraldehyde 3-phosphate. This Streptomyces avermitilis (strain ATCC 31267 / DSM 46492 / JCM 5070 / NBRC 14893 / NCIMB 12804 / NRRL 8165 / MA-4680) protein is Tryptophan synthase alpha chain.